Reading from the N-terminus, the 211-residue chain is MRMRYKPWAEDYLKKEPNIVDIDGSHAGRISEWFDNDQPIYIEVGSGRGQFITTLAAKHPEINFISMEREKSVMIKVLDKVIEQGLTNIKLICNDAIELNDYFKDGEVSRLYLNFSDPWPKKRHTKRRLTYQTYLALYKQVLKDDGEIHFKTDNRGLFAYSLESMSQFGMYFTKINLNLHEEDDEENIETEYERKFSDKGSRIYRMEAKFH.

The S-adenosyl-L-methionine site is built by Glu-43, Glu-68, Asp-95, and Asp-117. Asp-117 is an active-site residue. Residues Lys-121, Asp-153, and Thr-190–Glu-193 contribute to the substrate site.

This sequence belongs to the class I-like SAM-binding methyltransferase superfamily. TrmB family.

It catalyses the reaction guanosine(46) in tRNA + S-adenosyl-L-methionine = N(7)-methylguanosine(46) in tRNA + S-adenosyl-L-homocysteine. The protein operates within tRNA modification; N(7)-methylguanine-tRNA biosynthesis. In terms of biological role, catalyzes the formation of N(7)-methylguanine at position 46 (m7G46) in tRNA. This Staphylococcus saprophyticus subsp. saprophyticus (strain ATCC 15305 / DSM 20229 / NCIMB 8711 / NCTC 7292 / S-41) protein is tRNA (guanine-N(7)-)-methyltransferase.